The following is a 246-amino-acid chain: MLKVLVVDDEMLARDELKYLLERTKEVEIIGEADCVEDALEELMKNKPDIVFLDIQLSDDNGFEIANILKKMKNPPAIVFATAYDQYALQAFEVDALDYILKPFDEERIVQTLKKYKKQKQSQIEMKQEIKGADVTAEMHKLALPIEESIVLVNIEDIVYVGLVDGKVTVKTVRETYVTHDTLVILEKKLPQASFMRVHRSFIANINHITEIQPWFNSTYNLIMKEGSKVPVSRTYAKELKKLLRI.

The 115-residue stretch at 3-117 (KVLVVDDEML…RIVQTLKKYK (115 aa)) folds into the Response regulatory domain. Asp-54 bears the 4-aspartylphosphate mark. Residues 142 to 246 (LALPIEESIV…AKELKKLLRI (105 aa)) enclose the HTH LytTR-type domain.

Phosphorylated by LytS.

Its subcellular location is the cytoplasm. Its function is as follows. Member of the two-component regulatory system LytS/LytT that probably regulates genes involved in cell wall metabolism. The polypeptide is Sensory transduction protein LytT (lytT) (Bacillus anthracis).